The following is a 253-amino-acid chain: 2,3-bisphosphoglycerate-dependent phosphoglycerate mutase (253 aa).

Residues 12 to 19 (RHGESEWN), 25 to 26 (TG), arginine 64, 91 to 94 (ERHY), lysine 102, and 118 to 119 (RR) contribute to the substrate site. Histidine 13 functions as the Tele-phosphohistidine intermediate in the catalytic mechanism. Catalysis depends on glutamate 91, which acts as the Proton donor/acceptor. Positions 126–148 (PPLADGSEFSQSDDPRYASIPPE) are disordered. Residue 187 to 188 (GN) participates in substrate binding.

Belongs to the phosphoglycerate mutase family. BPG-dependent PGAM subfamily.

It catalyses the reaction (2R)-2-phosphoglycerate = (2R)-3-phosphoglycerate. It participates in carbohydrate degradation; glycolysis; pyruvate from D-glyceraldehyde 3-phosphate: step 3/5. In terms of biological role, catalyzes the interconversion of 2-phosphoglycerate and 3-phosphoglycerate. The sequence is that of 2,3-bisphosphoglycerate-dependent phosphoglycerate mutase from Streptomyces avermitilis (strain ATCC 31267 / DSM 46492 / JCM 5070 / NBRC 14893 / NCIMB 12804 / NRRL 8165 / MA-4680).